Consider the following 247-residue polypeptide: Trypsin (247 aa).

The N-terminal stretch at 1–21 is a signal peptide; it reads LTTVISYFALVAFALVGVSYA. Positions 22–30 are cleaved as a propeptide — activation peptide; that stretch reads TPKASINGR. Positions 31–247 constitute a Peptidase S1 domain; it reads IVGGEMTDIS…QSNFPGVYGI (217 aa). Cysteines 61 and 77 form a disulfide. Catalysis depends on charge relay system residues His-76 and Asp-120. 2 cysteine pairs are disulfide-bonded: Cys-185/Cys-201 and Cys-212/Cys-236. Catalysis depends on Ser-216, which acts as the Charge relay system.

The protein belongs to the peptidase S1 family. As to expression, midgut.

Its subcellular location is the secreted. The protein resides in the extracellular space. It carries out the reaction Preferential cleavage: Arg-|-Xaa, Lys-|-Xaa.. This Simulium vittatum (Striped black fly) protein is Trypsin.